Here is a 279-residue protein sequence, read N- to C-terminus: NH(3)-dependent NAD(+) synthetase (279 aa).

Position 39–46 (39–46 (GLSGGIDS)) interacts with ATP. D45 contributes to the Mg(2+) binding site. R122 serves as a coordination point for deamido-NAD(+). T142 provides a ligand contact to ATP. E147 is a Mg(2+) binding site. K155 and D162 together coordinate deamido-NAD(+). Positions 171 and 193 each coordinate ATP. Residue 253–254 (HK) coordinates deamido-NAD(+).

The protein belongs to the NAD synthetase family. As to quaternary structure, homodimer.

It catalyses the reaction deamido-NAD(+) + NH4(+) + ATP = AMP + diphosphate + NAD(+) + H(+). It functions in the pathway cofactor biosynthesis; NAD(+) biosynthesis; NAD(+) from deamido-NAD(+) (ammonia route): step 1/1. Its function is as follows. Catalyzes the ATP-dependent amidation of deamido-NAD to form NAD. Uses ammonia as a nitrogen source. The sequence is that of NH(3)-dependent NAD(+) synthetase from Sulfolobus acidocaldarius (strain ATCC 33909 / DSM 639 / JCM 8929 / NBRC 15157 / NCIMB 11770).